We begin with the raw amino-acid sequence, 223 residues long: Cuticular glutathione peroxidase (223 aa).

The first 19 residues, 1–19 (MSAQLLILSHMVLLQLIVA), serve as a signal peptide directing secretion. N-linked (GlcNAc...) asparagine glycosylation occurs at Asn-39. Cys-74 is an active-site residue. A glycan (N-linked (GlcNAc...) asparagine) is linked at Asn-92.

The protein belongs to the glutathione peroxidase family. Homotetramer.

The protein resides in the secreted. It carries out the reaction 2 glutathione + H2O2 = glutathione disulfide + 2 H2O. Could inhibit the oxidative burst of leukocytes and neutralize the secondary products of lipid peroxidation, thus providing the resistance of these parasites to immune effector mechanisms and their persistence in the mammalian host. It may also be involved in the formation of cross-linking residues such as dityrosine, trityrosine and isotrityrosine identified in cuticular collagen. Highly cross-linked external cortex may also serve to protect the parasite from immune attack. In Brugia malayi (Filarial nematode worm), this protein is Cuticular glutathione peroxidase.